The primary structure comprises 117 residues: Holo-[acyl-carrier-protein] synthase (117 aa).

Mg(2+)-binding residues include D8 and E58.

The protein belongs to the P-Pant transferase superfamily. AcpS family. Requires Mg(2+) as cofactor.

It localises to the cytoplasm. It carries out the reaction apo-[ACP] + CoA = holo-[ACP] + adenosine 3',5'-bisphosphate + H(+). In terms of biological role, transfers the 4'-phosphopantetheine moiety from coenzyme A to a Ser of acyl-carrier-protein. The polypeptide is Holo-[acyl-carrier-protein] synthase (Shouchella clausii (strain KSM-K16) (Alkalihalobacillus clausii)).